The chain runs to 429 residues: Glutamate-1-semialdehyde 2,1-aminomutase 2 (429 aa).

Position 268 is an N6-(pyridoxal phosphate)lysine (lysine 268).

It belongs to the class-III pyridoxal-phosphate-dependent aminotransferase family. HemL subfamily. In terms of assembly, homodimer. Requires pyridoxal 5'-phosphate as cofactor.

The protein localises to the cytoplasm. The enzyme catalyses (S)-4-amino-5-oxopentanoate = 5-aminolevulinate. It participates in porphyrin-containing compound metabolism; protoporphyrin-IX biosynthesis; 5-aminolevulinate from L-glutamyl-tRNA(Glu): step 2/2. This Staphylococcus aureus (strain USA300) protein is Glutamate-1-semialdehyde 2,1-aminomutase 2.